We begin with the raw amino-acid sequence, 430 residues long: Gamma-glutamyl phosphate reductase (430 aa).

It belongs to the gamma-glutamyl phosphate reductase family.

Its subcellular location is the cytoplasm. The enzyme catalyses L-glutamate 5-semialdehyde + phosphate + NADP(+) = L-glutamyl 5-phosphate + NADPH + H(+). It functions in the pathway amino-acid biosynthesis; L-proline biosynthesis; L-glutamate 5-semialdehyde from L-glutamate: step 2/2. Catalyzes the NADPH-dependent reduction of L-glutamate 5-phosphate into L-glutamate 5-semialdehyde and phosphate. The product spontaneously undergoes cyclization to form 1-pyrroline-5-carboxylate. The protein is Gamma-glutamyl phosphate reductase of Rhodopseudomonas palustris (strain TIE-1).